Reading from the N-terminus, the 295-residue chain is Diaminopimelate epimerase (295 aa).

Residues Asn-13, Gln-46, and Asn-66 each coordinate substrate. Cys-75 (proton donor) is an active-site residue. Substrate contacts are provided by residues 76–77 (GN), Asn-162, Asn-195, and 213–214 (ER). The active-site Proton acceptor is the Cys-222. Residue 223–224 (GT) coordinates substrate.

Belongs to the diaminopimelate epimerase family. In terms of assembly, homodimer.

The protein resides in the cytoplasm. The catalysed reaction is (2S,6S)-2,6-diaminopimelate = meso-2,6-diaminopimelate. It participates in amino-acid biosynthesis; L-lysine biosynthesis via DAP pathway; DL-2,6-diaminopimelate from LL-2,6-diaminopimelate: step 1/1. In terms of biological role, catalyzes the stereoinversion of LL-2,6-diaminopimelate (L,L-DAP) to meso-diaminopimelate (meso-DAP), a precursor of L-lysine and an essential component of the bacterial peptidoglycan. The chain is Diaminopimelate epimerase from Psychrobacter cryohalolentis (strain ATCC BAA-1226 / DSM 17306 / VKM B-2378 / K5).